Consider the following 204-residue polypeptide: Probable 5-formyltetrahydrofolate cyclo-ligase (204 aa).

An ATP-binding site is contributed by 5–9 (KNQLR). Residues Glu57, Trp102, and 140 to 144 (HGKGY) each bind substrate. ATP contacts are provided by residues 139–146 (GHGKGYYD) and Asp188.

This sequence belongs to the 5-formyltetrahydrofolate cyclo-ligase family.

It catalyses the reaction (6S)-5-formyl-5,6,7,8-tetrahydrofolate + ATP = (6R)-5,10-methenyltetrahydrofolate + ADP + phosphate. The chain is Probable 5-formyltetrahydrofolate cyclo-ligase from Schizosaccharomyces pombe (strain 972 / ATCC 24843) (Fission yeast).